The chain runs to 340 residues: ATPase get3 (340 aa).

ATP is bound at residue 34–41; the sequence is KGGVGKTT. Residue D63 is part of the active site. ATP is bound by residues E242 and N269. C280 and C283 together coordinate Zn(2+).

It belongs to the arsA ATPase family. As to quaternary structure, homodimer.

Its subcellular location is the cytoplasm. The protein resides in the endoplasmic reticulum. In terms of biological role, ATPase required for the post-translational delivery of tail-anchored (TA) proteins to the endoplasmic reticulum. Recognizes and selectively binds the transmembrane domain of TA proteins in the cytosol. This complex then targets to the endoplasmic reticulum by membrane-bound receptors, where the tail-anchored protein is released for insertion. This process is regulated by ATP binding and hydrolysis. ATP binding drives the homodimer towards the closed dimer state, facilitating recognition of newly synthesized TA membrane proteins. ATP hydrolysis is required for insertion. Subsequently, the homodimer reverts towards the open dimer state, lowering its affinity for the membrane-bound receptor, and returning it to the cytosol to initiate a new round of targeting. This chain is ATPase get3 (get3), found in Sclerotinia sclerotiorum (strain ATCC 18683 / 1980 / Ss-1) (White mold).